The primary structure comprises 333 residues: Fructose-1,6-bisphosphatase class 1 (333 aa).

4 residues coordinate Mg(2+): E92, D113, L115, and D116. Residues 116–119 (DGSS), N209, Y242, and K272 each bind substrate. E278 contributes to the Mg(2+) binding site.

This sequence belongs to the FBPase class 1 family. As to quaternary structure, homotetramer. Mg(2+) serves as cofactor.

It localises to the cytoplasm. It carries out the reaction beta-D-fructose 1,6-bisphosphate + H2O = beta-D-fructose 6-phosphate + phosphate. The protein operates within carbohydrate biosynthesis; Calvin cycle. This is Fructose-1,6-bisphosphatase class 1 from Chlorobium phaeovibrioides (strain DSM 265 / 1930) (Prosthecochloris vibrioformis (strain DSM 265)).